The primary structure comprises 314 residues: Olfactory receptor 52H1 (314 aa).

The Extracellular portion of the chain corresponds to 1–32 (MIIFNLSSYNPGPFILVGIPGLEQFHVWIGIP). N-linked (GlcNAc...) asparagine glycosylation occurs at N5. Residues 33–53 (FCIIYIVAVVGNCILLYLIVV) traverse the membrane as a helical segment. Residues 54–59 (EHSLHE) are Cytoplasmic-facing. A helical transmembrane segment spans residues 60 to 80 (PMFFFLSMLAMTDLILSTAGV). Residues 81 to 101 (PKALSIFWLGAREITFPGCLT) lie on the Extracellular side of the membrane. A disulfide bond links C99 and C181. The chain crosses the membrane as a helical span at residues 102–122 (QMFFLHYNFVLDSAILMAMAF). At 123–149 (DHYVAICSPLRYTTILTPKTIIKSAMG) the chain is on the cytoplasmic side. Residues 150–170 (ISFRSFCIILPDVFLLTCLPF) form a helical membrane-spanning segment. At 171–197 (CRTRIIPHTYCEHIGVAQLACADISIN) the chain is on the extracellular side. Residues 198–218 (FWYGFCVPIMTVISDVILIAV) form a helical membrane-spanning segment. Over 219-242 (SYAHILCAVFGLPSQDACQKALGT) the chain is Cytoplasmic. Residues 243 to 263 (CGSHVCVILMFYTPAFFSILA) form a helical membrane-spanning segment. The Extracellular segment spans residues 264–275 (HRFGHNVSRTFH). N269 is a glycosylation site (N-linked (GlcNAc...) asparagine). A helical membrane pass occupies residues 276–296 (IMFANLYIVIPPALNPMVYGV). Residues 297–314 (KTKQIRDKVILLFSKGTG) lie on the Cytoplasmic side of the membrane.

The protein belongs to the G-protein coupled receptor 1 family.

The protein localises to the membrane. Functionally, odorant receptor. The polypeptide is Olfactory receptor 52H1 (OR52H1) (Homo sapiens (Human)).